The following is a 302-amino-acid chain: Thioredoxin-like protein CDSP32, chloroplastic (302 aa).

The transit peptide at 1 to 56 (MATVANFLAKPISTVVPRPSSAVASTSSFVFFNHKTNPLFRRKNLPKRLFSAVKIK) directs the protein to the chloroplast. The 136-residue stretch at 163–298 (HEEEGIEPDQ…IGEILRYSGV (136 aa)) folds into the Thioredoxin domain. Active-site nucleophile residues include Cys219 and Cys222. Cys219 and Cys222 are joined by a disulfide.

It belongs to the thioredoxin family. Interacts with the plastidial peroxiredoxin BAS1.

It localises to the plastid. It is found in the chloroplast stroma. Functionally, probable thiol-disulfide oxidoreductase involved in resistance to oxidative stress. May participate in the reduction of alkyl hydroperoxides derived from oxidative stress by acting as a physiological electron donor to the BAS1 peroxiredoxin. May regenerate methionine sulfoxide reductase B1 (MSRB1) activity through sulfenic acid reduction. This is Thioredoxin-like protein CDSP32, chloroplastic (CDSP32) from Arabidopsis thaliana (Mouse-ear cress).